The sequence spans 132 residues: Large ribosomal subunit protein bL21 (132 aa).

The tract at residues G104 to A132 is disordered.

The protein belongs to the bacterial ribosomal protein bL21 family. Part of the 50S ribosomal subunit. Contacts protein L20.

Its function is as follows. This protein binds to 23S rRNA in the presence of protein L20. The sequence is that of Large ribosomal subunit protein bL21 from Rhodopseudomonas palustris (strain BisB18).